Reading from the N-terminus, the 335-residue chain is Phosphate acyltransferase (335 aa).

It belongs to the PlsX family. In terms of assembly, homodimer. Probably interacts with PlsY.

Its subcellular location is the cytoplasm. The enzyme catalyses a fatty acyl-[ACP] + phosphate = an acyl phosphate + holo-[ACP]. It participates in lipid metabolism; phospholipid metabolism. Functionally, catalyzes the reversible formation of acyl-phosphate (acyl-PO(4)) from acyl-[acyl-carrier-protein] (acyl-ACP). This enzyme utilizes acyl-ACP as fatty acyl donor, but not acyl-CoA. This Streptococcus uberis (strain ATCC BAA-854 / 0140J) protein is Phosphate acyltransferase.